Here is a 189-residue protein sequence, read N- to C-terminus: uncharacterized protein (189 aa).

Residues Glu-105–Thr-115 are compositionally biased toward basic and acidic residues. A disordered region spans residues Glu-105 to Thr-189. Positions Ala-116–Lys-136 are enriched in basic residues. A compositionally biased stretch (acidic residues) spans Ser-141–Ser-151. Over residues Ser-161 to Lys-177 the composition is skewed to basic and acidic residues. A compositionally biased stretch (acidic residues) spans Glu-178–Thr-189.

This is an uncharacterized protein from Caenorhabditis elegans.